A 263-amino-acid polypeptide reads, in one-letter code: Fructose-bisphosphate aldolase class 1 (263 aa).

Lys-177 acts as the Schiff-base intermediate with dihydroxyacetone-P in catalysis.

It belongs to the DeoC/FbaB aldolase family.

The enzyme catalyses beta-D-fructose 1,6-bisphosphate = D-glyceraldehyde 3-phosphate + dihydroxyacetone phosphate. Has aldolase activity with fructose 1,6-bisphosphate. May play a role in the biosynthesis of aromatic amino acids (AroAA). This is Fructose-bisphosphate aldolase class 1 (fba1) from Halobacterium salinarum (strain ATCC 29341 / DSM 671 / R1).